We begin with the raw amino-acid sequence, 432 residues long: MSHHSQIQKIQAREIMDSRGNPTVEVDVILLDGSFGRAAVPSGASTGEYEAVELRDGDKHRYLGKGVLKAVEHVNLKIQEVLKGENAIDQNRIDQLMLDADGTKNKGKLGANAILGTSLAVAKAAAAHSKLPLYRYIGGNFARELPVPMMNIINGGAHADNNVDFQEFMILPVGAKSFREALRMGAEIFHSLKSVLKGKKLNTAVGDEGGFAPDLTSNVEAIEVILQAIEKAGYKPEKDVLLGLDAASSEFYDKSKKKYVLGAENNKEFSSAELVDYYANLVSKYPIITIEDGLDENDWDGWKLLSEKLGKKIQLVGDDLFVTNIEKLSKGISSGVGNSILIKVNQIGSLSETLSSIEMAKKAKYTNVVSHRSGETEDVTISHIAVATNAGQIKTGSLSRTDRIAKYNELLRIEEELGKSAVYKGRETFYNL.

Gln166 serves as a coordination point for (2R)-2-phosphoglycerate. Glu208 serves as the catalytic Proton donor. Residues Asp245, Glu291, and Asp318 each coordinate Mg(2+). Residues Lys343, Arg372, Ser373, and Lys394 each coordinate (2R)-2-phosphoglycerate. Residue Lys343 is the Proton acceptor of the active site.

It belongs to the enolase family. Requires Mg(2+) as cofactor.

It is found in the cytoplasm. The protein resides in the secreted. It localises to the cell surface. The enzyme catalyses (2R)-2-phosphoglycerate = phosphoenolpyruvate + H2O. It functions in the pathway carbohydrate degradation; glycolysis; pyruvate from D-glyceraldehyde 3-phosphate: step 4/5. In terms of biological role, catalyzes the reversible conversion of 2-phosphoglycerate (2-PG) into phosphoenolpyruvate (PEP). It is essential for the degradation of carbohydrates via glycolysis. The polypeptide is Enolase (Leptospira interrogans serogroup Icterohaemorrhagiae serovar copenhageni (strain Fiocruz L1-130)).